The chain runs to 118 residues: Large ribosomal subunit protein uL22 (118 aa).

This sequence belongs to the universal ribosomal protein uL22 family. As to quaternary structure, part of the 50S ribosomal subunit.

Its function is as follows. This protein binds specifically to 23S rRNA; its binding is stimulated by other ribosomal proteins, e.g. L4, L17, and L20. It is important during the early stages of 50S assembly. It makes multiple contacts with different domains of the 23S rRNA in the assembled 50S subunit and ribosome. In terms of biological role, the globular domain of the protein is located near the polypeptide exit tunnel on the outside of the subunit, while an extended beta-hairpin is found that lines the wall of the exit tunnel in the center of the 70S ribosome. The chain is Large ribosomal subunit protein uL22 from Leuconostoc citreum (strain KM20).